The sequence spans 361 residues: Chorismate synthase (361 aa).

The NADP(+) site is built by Arg-48 and Arg-54. Residues 125-127, 238-239, Gly-278, 293-297, and Arg-319 each bind FMN; these read RSS, NA, and KPTSS.

It belongs to the chorismate synthase family. As to quaternary structure, homotetramer. The cofactor is FMNH2.

The catalysed reaction is 5-O-(1-carboxyvinyl)-3-phosphoshikimate = chorismate + phosphate. Its pathway is metabolic intermediate biosynthesis; chorismate biosynthesis; chorismate from D-erythrose 4-phosphate and phosphoenolpyruvate: step 7/7. Catalyzes the anti-1,4-elimination of the C-3 phosphate and the C-6 proR hydrogen from 5-enolpyruvylshikimate-3-phosphate (EPSP) to yield chorismate, which is the branch point compound that serves as the starting substrate for the three terminal pathways of aromatic amino acid biosynthesis. This reaction introduces a second double bond into the aromatic ring system. The sequence is that of Chorismate synthase from Vibrio parahaemolyticus serotype O3:K6 (strain RIMD 2210633).